Here is a 141-residue protein sequence, read N- to C-terminus: Large ribosomal subunit protein bL17 (141 aa).

This sequence belongs to the bacterial ribosomal protein bL17 family. Part of the 50S ribosomal subunit. Contacts protein L32.

This Agrobacterium fabrum (strain C58 / ATCC 33970) (Agrobacterium tumefaciens (strain C58)) protein is Large ribosomal subunit protein bL17.